A 668-amino-acid polypeptide reads, in one-letter code: Myb-like protein W (668 aa).

Disordered regions lie at residues Leu-57–Val-124, Glu-246–Val-357, Lys-403–Gly-432, Tyr-497–Arg-546, Ser-561–Ser-583, and Gln-631–Ile-668. Over residues Asn-69–Asn-121 the composition is skewed to low complexity. A compositionally biased stretch (basic and acidic residues) spans Glu-246–Gln-268. Positions Asn-293–Asp-307 are enriched in low complexity. Positions Asn-308–Asp-318 are enriched in acidic residues. The segment covering Glu-319–Glu-335 has biased composition (basic and acidic residues). In terms of domain architecture, Myb-like spans Thr-344–Phe-398. The span at Asn-501–Asn-542 shows a compositional bias: low complexity. The segment covering Cys-632 to Arg-641 has biased composition (basic and acidic residues). Acidic residues predominate over residues Asp-642–Tyr-651.

In Dictyostelium discoideum (Social amoeba), this protein is Myb-like protein W (mybW).